A 145-amino-acid polypeptide reads, in one-letter code: UPF0179 protein Maeo_1037 (145 aa).

It belongs to the UPF0179 family.

The chain is UPF0179 protein Maeo_1037 from Methanococcus aeolicus (strain ATCC BAA-1280 / DSM 17508 / OCM 812 / Nankai-3).